Here is a 94-residue protein sequence, read N- to C-terminus: Small ribosomal subunit protein uS19 (94 aa).

The protein belongs to the universal ribosomal protein uS19 family.

In terms of biological role, protein S19 forms a complex with S13 that binds strongly to the 16S ribosomal RNA. The protein is Small ribosomal subunit protein uS19 of Wolbachia sp. subsp. Brugia malayi (strain TRS).